Here is a 317-residue protein sequence, read N- to C-terminus: L-lactate dehydrogenase 1 (317 aa).

Residues valine 17, aspartate 38, lysine 43, tyrosine 69, and 83 to 84 contribute to the NAD(+) site; that span reads GA. Residues glutamine 86 and arginine 92 each contribute to the substrate site. NAD(+)-binding positions include serine 105, 122 to 124, and serine 147; that span reads ATN. 124-127 contacts substrate; the sequence is NPVD. A substrate-binding site is contributed by 152 to 155; the sequence is DSAR. The Proton acceptor role is filled by histidine 179. The residue at position 223 (tyrosine 223) is a Phosphotyrosine. Threonine 232 serves as a coordination point for substrate.

It belongs to the LDH/MDH superfamily. LDH family. As to quaternary structure, homotetramer.

Its subcellular location is the cytoplasm. The enzyme catalyses (S)-lactate + NAD(+) = pyruvate + NADH + H(+). The protein operates within fermentation; pyruvate fermentation to lactate; (S)-lactate from pyruvate: step 1/1. In terms of biological role, catalyzes the conversion of lactate to pyruvate (Potential). Appears to be the primary factor that allows S.aureus growth during nitrosative stress in both aerobically and anaerobically cultured cells. This chain is L-lactate dehydrogenase 1, found in Staphylococcus aureus (strain MRSA252).